The primary structure comprises 859 residues: Catenin delta-1 (859 aa).

The stretch at 15-44 forms a coiled coil; sequence SVRAQEAQFELLSRALEEERRHVTAQLDRV. A disordered region spans residues 226 to 254; it reads IDGPDYATTGRRGANGGDPRRRLRSYEDP. Residues 243–254 show a composition bias toward basic and acidic residues; it reads DPRRRLRSYEDP. ARM repeat units follow at residues 279–317, 320–359, 363–401, 402–446, 464–503, 513–552, 574–614, 621–660, 661–700, and 701–746; these read APNS…HLSY, EDVK…NLSY, RENK…VTGT, LWNL…RVEG, LRNI…LVDS, LRNI…VRRG, AQGY…NLCA, RCIR…NLCG, DNRN…CVIN, and TIHE…GFCL.

The protein belongs to the beta-catenin family. In terms of assembly, interacts with C-cadherin and with zbtb33. In terms of tissue distribution, ubiquitously expressed.

The protein resides in the cell junction. It localises to the adherens junction. The protein localises to the cytoplasm. It is found in the nucleus. Its subcellular location is the cell membrane. In terms of biological role, key regulator of cell-cell adhesion that associates with and regulates the cell adhesion properties of both C-, E- and N-cadherins, being critical for their surface stability. Beside cell-cell adhesion, regulates gene transcription through several transcription factors including ZBTB33/Kaiso2 and GLIS2, and the activity of Rho family GTPases and downstream cytoskeletal dynamics. Implicated both in cell transformation by SRC and in ligand-induced receptor signaling through the EGF, PDGF, CSF-1 and ERBB2 receptors. Required for gastrulation, axial elongation and development of the craniofacial skeleton and eye. This Xenopus laevis (African clawed frog) protein is Catenin delta-1 (ctnnd1).